Reading from the N-terminus, the 675-residue chain is UvrABC system protein B (675 aa).

Residues 32–417 (EGLSDGLAYQ…EHAGQVVEQV (386 aa)) form the Helicase ATP-binding domain. Residue 45–52 (GVTGSGKT) participates in ATP binding. The Beta-hairpin motif lies at 98-121 (YYDYYQPEAYVPSRDLFIEKDSAI). The Helicase C-terminal domain maps to 436-602 (QVDDLMSEIN…QIKKQVKDII (167 aa)). In terms of domain architecture, UVR spans 634 to 669 (IKEIAKLEKAMQQAARDLQFEEAAVLRDRIRNIKEN).

Belongs to the UvrB family. Forms a heterotetramer with UvrA during the search for lesions. Interacts with UvrC in an incision complex.

It localises to the cytoplasm. In terms of biological role, the UvrABC repair system catalyzes the recognition and processing of DNA lesions. A damage recognition complex composed of 2 UvrA and 2 UvrB subunits scans DNA for abnormalities. Upon binding of the UvrA(2)B(2) complex to a putative damaged site, the DNA wraps around one UvrB monomer. DNA wrap is dependent on ATP binding by UvrB and probably causes local melting of the DNA helix, facilitating insertion of UvrB beta-hairpin between the DNA strands. Then UvrB probes one DNA strand for the presence of a lesion. If a lesion is found the UvrA subunits dissociate and the UvrB-DNA preincision complex is formed. This complex is subsequently bound by UvrC and the second UvrB is released. If no lesion is found, the DNA wraps around the other UvrB subunit that will check the other stand for damage. The sequence is that of UvrABC system protein B from Neisseria meningitidis serogroup A / serotype 4A (strain DSM 15465 / Z2491).